Reading from the N-terminus, the 845-residue chain is Envelope glycoprotein B (845 aa).

The first 41 residues, 1-41 (MSFTDQTYTRSCMHTCITRDHRLYGIVIISLLLLLDNSVFC), serve as a signal peptide directing secretion. Residues 42–727 (QNENKVIDIK…SGVASFLQNP (686 aa)) lie on the Virion surface side of the membrane. Disulfide bonds link C62–C523, C80–C479, C153–C218, C310–C358, and C552–C591. The tract at residues 120 to 126 (RYADVFS) is involved in fusion and/or binding to host membrane. N-linked (GlcNAc...) asparagine; by host glycosylation occurs at N175. The involved in fusion and/or binding to host membrane stretch occupies residues 204–212 (LPGTWLRKT). Residues N328, N388, N414, N420, N425, N564, and N632 are each glycosylated (N-linked (GlcNAc...) asparagine; by host). The interval 677-725 (LEQAIVTKPYVPPAGMQQALQGLSGVGSVITGTLGAMQSLVSGVASFLQ) is hydrophobic membrane proximal region. A helical transmembrane segment spans residues 728-748 (FGGTLSIILIGCIIVGVIIIY). Over 749–845 (NRMNQSRGSP…GYTTLSSMNI (97 aa)) the chain is Intravirion. The Internalization motif motif lies at 837 to 840 (YTTL).

This sequence belongs to the herpesviridae glycoprotein B family. As to quaternary structure, homotrimer; disulfide-linked. Binds to heparan sulfate proteoglycans. Interacts with gH/gL heterodimer. Post-translationally, a proteolytic cleavage by host furin generates two subunits that remain linked by disulfide bonds.

It localises to the virion membrane. The protein resides in the host cell membrane. It is found in the host endosome membrane. Its subcellular location is the host Golgi apparatus membrane. Functionally, envelope glycoprotein that forms spikes at the surface of virion envelope. Essential for the initial attachment to heparan sulfate moieties of the host cell surface proteoglycans. Involved in fusion of viral and cellular membranes leading to virus entry into the host cell. Following initial binding to its host receptors, membrane fusion is mediated by the fusion machinery composed at least of gB and the heterodimer gH/gL. May be involved in the fusion between the virion envelope and the outer nuclear membrane during virion egress. In Elephas maximus (Indian elephant), this protein is Envelope glycoprotein B.